Here is a 161-residue protein sequence, read N- to C-terminus: Non-specific lipid transfer protein GPI-anchored 24 (161 aa).

Positions 1 to 23 (MAQTTTLILLLATLLVAATTVSG) are cleaved as a signal peptide. Cystine bridges form between C42–C79, C49–C63, C64–C104, and C77–C113. A glycan (N-linked (GlcNAc...) asparagine) is linked at N92. D138 carries the GPI-anchor amidated aspartate lipid modification. The propeptide at 139–161 (AASKLAGTGLVGIVVITIAAMFY) is removed in mature form.

The protein belongs to the plant LTP family.

It is found in the cell membrane. Probable lipid transfer protein. This is Non-specific lipid transfer protein GPI-anchored 24 from Arabidopsis thaliana (Mouse-ear cress).